Here is a 467-residue protein sequence, read N- to C-terminus: UDP-N-acetylmuramate--L-alanine ligase (467 aa).

114-120 (GTHGKTT) contributes to the ATP binding site.

It belongs to the MurCDEF family.

Its subcellular location is the cytoplasm. It catalyses the reaction UDP-N-acetyl-alpha-D-muramate + L-alanine + ATP = UDP-N-acetyl-alpha-D-muramoyl-L-alanine + ADP + phosphate + H(+). It functions in the pathway cell wall biogenesis; peptidoglycan biosynthesis. Its function is as follows. Cell wall formation. The sequence is that of UDP-N-acetylmuramate--L-alanine ligase from Azorhizobium caulinodans (strain ATCC 43989 / DSM 5975 / JCM 20966 / LMG 6465 / NBRC 14845 / NCIMB 13405 / ORS 571).